A 1198-amino-acid chain; its full sequence is Tetratricopeptide repeat protein 17 (1198 aa).

A TPR 1 repeat occupies 295–328 (FTSYYTLGNIYAMLGEYNHSVLCYDHALQAKPGF). Residues 340–382 (CQQKLEQKLEAQHRSLQRTLNELKEYQKQHDHYLRQQEILEKH) adopt a coiled-coil conformation. 2 TPR repeats span residues 619-652 (WLIL…APVQ) and 689-722 (PLTF…STKC). Disordered stretches follow at residues 774 to 793 (LDAA…PVLS) and 902 to 954 (VKKP…YQSL). Basic residues predominate over residues 902–914 (VKKPKGDHKKPPG). TPR repeat units follow at residues 1071-1105 (SWVL…APHQ), 1108-1141 (DVPL…APHF), and 1142-1175 (AVNH…QPEF).

Belongs to the TTC17 family. In terms of assembly, interacts with CATIP.

Its subcellular location is the cytoplasm. It is found in the cell membrane. It localises to the cytoskeleton. Its function is as follows. Plays a role in primary ciliogenesis by modulating actin polymerization. The protein is Tetratricopeptide repeat protein 17 (Ttc17) of Mus musculus (Mouse).